We begin with the raw amino-acid sequence, 270 residues long: MTTETRQKRIGIFDSGIGGLTVLRELYRQLPKESILYFADTARLPYGTRTTEEILQFVDEIITWLVKSGVKMVLMACNTSSALALEKVKSKFDVPILGLIVPGANTAVKQGKRIGVIATPATAASNAYRYAILEANASVQVWQVGCPYFVPLIEQNQLHDPYTYQIAEEYLMPLIQQQIDTLVYGCTHYPYLEPILRSLLPKSVIFVDPAVSLVKVVARELKIMNLENDKTPKPTKFVVSSSPQKFADLSLQLLGYKPDVQVISLPAMLK.

Substrate is bound by residues 14 to 15 (DS) and 46 to 47 (YG). C77 (proton donor/acceptor) is an active-site residue. 78-79 (NT) is a binding site for substrate. The active-site Proton donor/acceptor is C186. Position 187–188 (187–188 (TH)) interacts with substrate.

Belongs to the aspartate/glutamate racemases family.

The catalysed reaction is L-glutamate = D-glutamate. It participates in cell wall biogenesis; peptidoglycan biosynthesis. In terms of biological role, provides the (R)-glutamate required for cell wall biosynthesis. The protein is Glutamate racemase of Trichodesmium erythraeum (strain IMS101).